A 691-amino-acid polypeptide reads, in one-letter code: NADH-ubiquinone oxidoreductase 75 kDa subunit (691 aa).

A 2Fe-2S ferredoxin-type domain is found at 1–78 (MVNVFVDGLS…NMKIFTNTPL (78 aa)). [2Fe-2S] cluster-binding residues include C34, C45, C48, and C62. Positions 78–117 (LVKKAREGVLEFLLVNHPLDCPICDQGGECDLQDLTMVYG) constitute a 4Fe-4S His(Cys)3-ligated-type domain. [4Fe-4S] cluster is bound by residues H94, C98, C101, C107, C146, C149, C152, and C196. Residues 215–271 (LQSTESIDVSDAIGSNIRIDVRGSEIMRILPRLNEDVNEEWISDKARFCYDGLKRQR) form the 4Fe-4S Mo/W bis-MGD-type domain.

The protein belongs to the complex I 75 kDa subunit family. Complex I is composed of about 30 different subunits. [2Fe-2S] cluster serves as cofactor. Requires [4Fe-4S] cluster as cofactor.

Its subcellular location is the mitochondrion inner membrane. The catalysed reaction is a ubiquinone + NADH + 5 H(+)(in) = a ubiquinol + NAD(+) + 4 H(+)(out). Core subunit of the mitochondrial membrane respiratory chain NADH dehydrogenase (Complex I) that is believed to belong to the minimal assembly required for catalysis. Complex I functions in the transfer of electrons from NADH to the respiratory chain. The immediate electron acceptor for the enzyme is believed to be ubiquinone. This is the largest subunit of complex I and it is a component of the iron-sulfur (IP) fragment of the enzyme. It may form part of the active site crevice where NADH is oxidized. This is NADH-ubiquinone oxidoreductase 75 kDa subunit (NAD11) from Reclinomonas americana.